The primary structure comprises 499 residues: Aspartyl/glutamyl-tRNA(Asn/Gln) amidotransferase subunit B (499 aa).

This sequence belongs to the GatB/GatE family. GatB subfamily. In terms of assembly, heterotrimer of A, B and C subunits.

It carries out the reaction L-glutamyl-tRNA(Gln) + L-glutamine + ATP + H2O = L-glutaminyl-tRNA(Gln) + L-glutamate + ADP + phosphate + H(+). The catalysed reaction is L-aspartyl-tRNA(Asn) + L-glutamine + ATP + H2O = L-asparaginyl-tRNA(Asn) + L-glutamate + ADP + phosphate + 2 H(+). In terms of biological role, allows the formation of correctly charged Asn-tRNA(Asn) or Gln-tRNA(Gln) through the transamidation of misacylated Asp-tRNA(Asn) or Glu-tRNA(Gln) in organisms which lack either or both of asparaginyl-tRNA or glutaminyl-tRNA synthetases. The reaction takes place in the presence of glutamine and ATP through an activated phospho-Asp-tRNA(Asn) or phospho-Glu-tRNA(Gln). The chain is Aspartyl/glutamyl-tRNA(Asn/Gln) amidotransferase subunit B from Bartonella bacilliformis (strain ATCC 35685 / KC583 / Herrer 020/F12,63).